The chain runs to 178 residues: Adenine phosphoribosyltransferase (178 aa).

The protein belongs to the purine/pyrimidine phosphoribosyltransferase family. Homodimer.

The protein localises to the cytoplasm. The enzyme catalyses AMP + diphosphate = 5-phospho-alpha-D-ribose 1-diphosphate + adenine. Its pathway is purine metabolism; AMP biosynthesis via salvage pathway; AMP from adenine: step 1/1. Catalyzes a salvage reaction resulting in the formation of AMP, that is energically less costly than de novo synthesis. The chain is Adenine phosphoribosyltransferase from Streptomyces clavuligerus.